The following is a 274-amino-acid chain: Rhamnulose-1-phosphate aldolase (274 aa).

The active site involves Glu-117. Positions 141, 143, and 212 each coordinate Zn(2+).

This sequence belongs to the aldolase class II family. RhaD subfamily. As to quaternary structure, homotetramer. Requires Zn(2+) as cofactor.

The protein localises to the cytoplasm. The enzyme catalyses L-rhamnulose 1-phosphate = (S)-lactaldehyde + dihydroxyacetone phosphate. The protein operates within carbohydrate degradation; L-rhamnose degradation; glycerone phosphate from L-rhamnose: step 3/3. Catalyzes the reversible cleavage of L-rhamnulose-1-phosphate to dihydroxyacetone phosphate (DHAP) and L-lactaldehyde. This Pectobacterium atrosepticum (strain SCRI 1043 / ATCC BAA-672) (Erwinia carotovora subsp. atroseptica) protein is Rhamnulose-1-phosphate aldolase.